The sequence spans 234 residues: Fibroblast growth factor-binding protein 1 (234 aa).

Residues 1–23 (MRTHGLTLLSLLLLAVPMLLVEA) form the signal peptide. Residues 25–59 (KEGRNRRGSKASADESLALGKPGKEPRSQPTNYPI) are disordered. Disulfide bonds link Cys-71–Cys-88, Cys-97–Cys-130, and Cys-106–Cys-142. The N-linked (GlcNAc...) asparagine glycan is linked to Asn-155. The interval 169 to 200 (MEPSPMDTVEVTTSSSPEKTQTMATKDPQCEE) is disordered. Ser-172 carries an O-linked (GalNAc...) serine glycan. Polar residues predominate over residues 178 to 192 (EVTTSSSPEKTQTMA). A sufficient for interaction with FGF2 and FGF2-induced effects region spans residues 194 to 234 (KDPQCEEEDLKNQRKAALEYCGETWGSLCNFFLSMVQGSSC). 2 disulfide bridges follow: Cys-198–Cys-234 and Cys-214–Cys-222.

It belongs to the fibroblast growth factor-binding protein family. In terms of assembly, found in a complex with FGFBP1, FGF1 and FGF2. Interacts with FGF1, FGF7, FGF10, FGF22 and HSPG2. Interacts with FGF2.

The protein localises to the secreted. Its subcellular location is the extracellular space. It localises to the cell membrane. Acts as a carrier protein that release fibroblast-binding factors (FGFs) from the extracellular matrix (EM) storage and thus enhance the mitogenic activity of FGFs. Enhances FGF2 signaling during tissue repair, angiogenesis and in tumor growth. In Bos taurus (Bovine), this protein is Fibroblast growth factor-binding protein 1 (FGFBP1).